The following is a 333-amino-acid chain: Mycothiol acetyltransferase (333 aa).

2 consecutive N-acetyltransferase domains span residues 18–170 and 176–333; these read PTLS…LPEP and VTVR…AAAD. 1D-myo-inositol 2-(L-cysteinylamino)-2-deoxy-alpha-D-glucopyranoside is bound at residue E46. 98–100 serves as a coordination point for acetyl-CoA; it reads IVV. Positions 203, 242, and 261 each coordinate 1D-myo-inositol 2-(L-cysteinylamino)-2-deoxy-alpha-D-glucopyranoside. Acetyl-CoA-binding positions include 265-267 and 272-278; these read VGV and GGAGLGR. Y299 provides a ligand contact to 1D-myo-inositol 2-(L-cysteinylamino)-2-deoxy-alpha-D-glucopyranoside. 304-309 is a binding site for acetyl-CoA; that stretch reads NERAVR.

Belongs to the acetyltransferase family. MshD subfamily. Monomer.

The enzyme catalyses 1D-myo-inositol 2-(L-cysteinylamino)-2-deoxy-alpha-D-glucopyranoside + acetyl-CoA = mycothiol + CoA + H(+). In terms of biological role, catalyzes the transfer of acetyl from acetyl-CoA to desacetylmycothiol (Cys-GlcN-Ins) to form mycothiol. The chain is Mycothiol acetyltransferase from Frankia alni (strain DSM 45986 / CECT 9034 / ACN14a).